The primary structure comprises 399 residues: S-adenosylmethionine synthase (399 aa).

Histidine 17 contributes to the ATP binding site. Position 19 (aspartate 19) interacts with Mg(2+). Position 45 (glutamate 45) interacts with K(+). L-methionine contacts are provided by glutamate 58 and glutamine 101. Residues 101-111 are flexible loop; sequence QSPDIAQGVDK. Residues 176–178, 243–244, aspartate 252, 258–259, and lysine 279 contribute to the ATP site; these read DGK, RF, and RK. Aspartate 252 serves as a coordination point for L-methionine. Position 283 (lysine 283) interacts with L-methionine.

It belongs to the AdoMet synthase family. Homotetramer; dimer of dimers. The cofactor is Mg(2+). Requires K(+) as cofactor.

The protein localises to the cytoplasm. The enzyme catalyses L-methionine + ATP + H2O = S-adenosyl-L-methionine + phosphate + diphosphate. It functions in the pathway amino-acid biosynthesis; S-adenosyl-L-methionine biosynthesis; S-adenosyl-L-methionine from L-methionine: step 1/1. Functionally, catalyzes the formation of S-adenosylmethionine (AdoMet) from methionine and ATP. The overall synthetic reaction is composed of two sequential steps, AdoMet formation and the subsequent tripolyphosphate hydrolysis which occurs prior to release of AdoMet from the enzyme. The polypeptide is S-adenosylmethionine synthase (Staphylococcus epidermidis (strain ATCC 35984 / DSM 28319 / BCRC 17069 / CCUG 31568 / BM 3577 / RP62A)).